We begin with the raw amino-acid sequence, 95 residues long: Large ribosomal subunit protein uL23c (95 aa).

Belongs to the universal ribosomal protein uL23 family. In terms of assembly, part of the 50S ribosomal subunit.

The protein resides in the plastid. Its subcellular location is the chloroplast. Its function is as follows. Binds to 23S rRNA. This chain is Large ribosomal subunit protein uL23c (rpl23), found in Chlamydomonas reinhardtii (Chlamydomonas smithii).